The primary structure comprises 578 residues: Putative multidrug export ATP-binding/permease protein SA1683 (578 aa).

Residues 1–15 are Cytoplasmic-facing; sequence MIKRYLQFVKPYKYR. Residues 16-36 form a helical membrane-spanning segment; it reads IFATIIVGIIKFGIPMLIPLL. In terms of domain architecture, ABC transmembrane type-1 spans 16-306; the sequence is IFATIIVGII…LVASFTTLTQ (291 aa). Topologically, residues 37–59 are extracellular; that stretch reads IKYAIDGVINNHALTTDEKVHHL. The helical transmembrane segment at 60–80 threads the bilayer; the sequence is TIAIGIALFIFVIVRPPIEFI. Residues 81–138 are Cytoplasmic-facing; that stretch reads RQYLAQWTSNKILYDIRKKLYNHLQALSARFYANNQVGQVISRVINDVEQTKDFILTG. The helical transmembrane segment at 139–159 threads the bilayer; sequence LMNIWLDCITIIIALSIMFFL. At 160–162 the chain is on the extracellular side; that stretch reads DVK. The helical transmembrane segment at 163-183 threads the bilayer; that stretch reads LTLAALFIFPFYILTVYVFFG. The Cytoplasmic segment spans residues 184–244; that stretch reads RLRKLTRERS…TRALKHTRWN (61 aa). Residues 245–263 form a helical membrane-spanning segment; it reads AYSFAAINTVTDIGPIIVI. At 264-269 the chain is on the extracellular side; the sequence is GVGAYL. A helical transmembrane segment spans residues 270–287; sequence AISGSITVGTLAAFVGYL. The Cytoplasmic portion of the chain corresponds to 288–578; that stretch reads ELLFGPLRRL…YEHLYSIQNL (291 aa). The 236-residue stretch at 340–575 folds into the ABC transporter domain; it reads IDIDHVSFQY…QGAYEHLYSI (236 aa). 374–381 serves as a coordination point for ATP; sequence GMSGGGKS.

This sequence belongs to the ABC transporter superfamily. Homodimer.

The protein resides in the cell membrane. In terms of biological role, may be involved in multidrug export. Transmembrane domains (TMD) form a pore in the cell membrane and the ATP-binding domain (NBD) is responsible for energy generation. The chain is Putative multidrug export ATP-binding/permease protein SA1683 from Staphylococcus aureus (strain N315).